Reading from the N-terminus, the 339-residue chain is DNA-directed RNA polymerase subunit alpha (339 aa).

Residues 1-233 (MVREEVAGST…DLFLPFLHAE (233 aa)) form an alpha N-terminal domain (alpha-NTD) region. Positions 264-339 (KKGIPLNCIF…IDLLKNKLSF (76 aa)) are alpha C-terminal domain (alpha-CTD).

It belongs to the RNA polymerase alpha chain family. In plastids the minimal PEP RNA polymerase catalytic core is composed of four subunits: alpha, beta, beta', and beta''. When a (nuclear-encoded) sigma factor is associated with the core the holoenzyme is formed, which can initiate transcription.

It localises to the plastid. The protein resides in the chloroplast. The catalysed reaction is RNA(n) + a ribonucleoside 5'-triphosphate = RNA(n+1) + diphosphate. DNA-dependent RNA polymerase catalyzes the transcription of DNA into RNA using the four ribonucleoside triphosphates as substrates. The polypeptide is DNA-directed RNA polymerase subunit alpha (Eremopyrum distans).